The following is a 128-amino-acid chain: Type III secretion protein HrcQb (128 aa).

The segment covering 1 to 21 (MSTEDLYQEDVEMLDDYEDPS) has biased composition (acidic residues). The interval 1–57 (MSTEDLYQEDVEMLDDYEDPSTEQHWSEEDGEPSGYATAEPDDHAAQEEQDEPPALD) is disordered. Residues 50 to 128 (QDEPPALDSL…LQITRLVTRS (79 aa)) form a hrcQb-C region. Positions 78-81 (RRLD) are dimer-dimer interface.

The protein belongs to the FliN/MopA/SpaO family. Homotetramer. The four monomers assemble into two tightly bound homodimers. Interacts with HrcQa.

The protein localises to the cytoplasm. Component of the type III secretion system, which is required for effector protein delivery, parasitism, and pathogenicity. Probably participates in the formation of a C-ring-like assembly along with HrcQa. In Pseudomonas savastanoi pv. phaseolicola (Pseudomonas syringae pv. phaseolicola), this protein is Type III secretion protein HrcQb (hrcQb).